A 484-amino-acid polypeptide reads, in one-letter code: Putative cysteine ligase BshC (484 aa).

A coiled-coil region spans residues 372-435; sequence RAFRDRVEGL…AARDEVLARH (64 aa).

Belongs to the BshC family.

The sequence is that of Putative cysteine ligase BshC from Thermus thermophilus (strain ATCC 27634 / DSM 579 / HB8).